Reading from the N-terminus, the 232-residue chain is Large ribosomal subunit protein uL1 (232 aa).

Belongs to the universal ribosomal protein uL1 family. Part of the 50S ribosomal subunit.

In terms of biological role, binds directly to 23S rRNA. The L1 stalk is quite mobile in the ribosome, and is involved in E site tRNA release. Its function is as follows. Protein L1 is also a translational repressor protein, it controls the translation of the L11 operon by binding to its mRNA. The polypeptide is Large ribosomal subunit protein uL1 (Lysinibacillus sphaericus (strain C3-41)).